The sequence spans 1037 residues: Multidrug resistance protein MdtF (1037 aa).

The Cytoplasmic portion of the chain corresponds to 1–9 (MANYFIDRP). Residues 10–30 (VFAWVLAIIMMLAGGLAIMNL) form a helical membrane-spanning segment. Over 31–338 (PVAQYPQIAP…TTPFIKISIQ (308 aa)) the chain is Periplasmic. A helical transmembrane segment spans residues 339–359 (EVFKTLVEAIILVFLVMYLFL). At 360–369 (QNFRATIIPT) the chain is on the cytoplasmic side. The helical transmembrane segment at 370-390 (IAVPVVILGTFAILSAVGFTI) threads the bilayer. Residues 391–392 (NT) lie on the Periplasmic side of the membrane. The chain crosses the membrane as a helical span at residues 393–413 (LTMFGMVLAIGLLVDDAIVVV). The Cytoplasmic portion of the chain corresponds to 414 to 440 (ENVERVIAEDKLPPKEATHKSMGQIQR). Residues 441 to 461 (ALVGIAVVLSAVFMPMAFMSG) form a helical membrane-spanning segment. Topologically, residues 462–471 (ATGEIYRQFS) are periplasmic. A helical transmembrane segment spans residues 472-492 (ITLISSMLLSVFVAMSLTPAL). The Cytoplasmic portion of the chain corresponds to 493-534 (CATILKAAPEGGHKPNALFARFNTLFEKSTQHYTDSTRSLLR). A helical transmembrane segment spans residues 535–555 (CTGRYMVVYLLICAGMAVLFL). Over 556–870 (RTPTSFLPEE…SYQEALSSNQ (315 aa)) the chain is Periplasmic. A helical transmembrane segment spans residues 871–891 (APALYAISLVVVFLALAALYE). Position 892 (serine 892) is a topological domain, cytoplasmic. A helical transmembrane segment spans residues 893–913 (WSIPFSVMLVVPLGVVGALLA). Over 914–927 (TDLRGLSNDVYFQV) the chain is Periplasmic. Residues 928–948 (GLLTTIGLSAKNAILIVEFAV) form a helical membrane-spanning segment. Over 949-972 (EMMQKEGKTPVEAIIEAARMRLRP) the chain is Cytoplasmic. Residues 973–993 (ILMTSLAFILGVLPLVISHGA) form a helical membrane-spanning segment. At 994–1006 (GSGAQNAVGTGVM) the chain is on the periplasmic side. The chain crosses the membrane as a helical span at residues 1007 to 1027 (GGMFAATVLAIYFVPVFFVVV). Over 1028–1037 (EHLFARFKKA) the chain is Cytoplasmic.

Belongs to the resistance-nodulation-cell division (RND) (TC 2.A.6) family. In terms of assembly, homotrimer. Part of the tripartite efflux system MdtEF-TolC, which is composed of an inner membrane transporter, MdtF, a membrane fusion protein, MdtE, and an outer membrane component, TolC. The complex forms a large protein conduit and can translocate molecules across both the inner and outer membranes.

It is found in the cell inner membrane. In terms of biological role, part of the tripartite efflux system MdtEF-TolC, which confers resistance to various compounds. In Escherichia coli O6:H1 (strain CFT073 / ATCC 700928 / UPEC), this protein is Multidrug resistance protein MdtF (mdtF).